The primary structure comprises 369 residues: UPF0284 protein cce_1085 (369 aa).

The protein belongs to the UPF0284 family.

The protein is UPF0284 protein cce_1085 of Crocosphaera subtropica (strain ATCC 51142 / BH68) (Cyanothece sp. (strain ATCC 51142)).